The sequence spans 531 residues: O-phosphoserine--tRNA(Cys) ligase (531 aa).

Residues 189–191 (HMT), 234–236 (SAS), 276–277 (YY), and Asn-319 each bind substrate.

It belongs to the class-II aminoacyl-tRNA synthetase family. O-phosphoseryl-tRNA(Cys) synthetase subfamily. Homotetramer. Interacts with SepCysS.

It carries out the reaction tRNA(Cys) + O-phospho-L-serine + ATP = O-phospho-L-seryl-tRNA(Cys) + AMP + diphosphate. Its function is as follows. Catalyzes the attachment of O-phosphoserine (Sep) to tRNA(Cys). In Methanospirillum hungatei JF-1 (strain ATCC 27890 / DSM 864 / NBRC 100397 / JF-1), this protein is O-phosphoserine--tRNA(Cys) ligase.